Here is a 346-residue protein sequence, read N- to C-terminus: Holliday junction branch migration complex subunit RuvB (346 aa).

A large ATPase domain (RuvB-L) region spans residues 4 to 185; sequence SDRIITASPF…FGIVSRLEFY (182 aa). Residues leucine 24, arginine 25, glycine 66, lysine 69, threonine 70, threonine 71, 132–134, arginine 175, tyrosine 185, and arginine 222 contribute to the ATP site; that span reads EDY. Threonine 70 contributes to the Mg(2+) binding site. Residues 186-256 form a small ATPAse domain (RuvB-S) region; the sequence is TSDELSKIVT…VADAALQMLD (71 aa). The tract at residues 259–346 is head domain (RuvB-H); sequence AAGLDVLDRK…AATPGLFNPD (88 aa). DNA is bound by residues arginine 295, arginine 314, and arginine 319.

Belongs to the RuvB family. In terms of assembly, homohexamer. Forms an RuvA(8)-RuvB(12)-Holliday junction (HJ) complex. HJ DNA is sandwiched between 2 RuvA tetramers; dsDNA enters through RuvA and exits via RuvB. An RuvB hexamer assembles on each DNA strand where it exits the tetramer. Each RuvB hexamer is contacted by two RuvA subunits (via domain III) on 2 adjacent RuvB subunits; this complex drives branch migration. In the full resolvosome a probable DNA-RuvA(4)-RuvB(12)-RuvC(2) complex forms which resolves the HJ.

The protein localises to the cytoplasm. The enzyme catalyses ATP + H2O = ADP + phosphate + H(+). In terms of biological role, the RuvA-RuvB-RuvC complex processes Holliday junction (HJ) DNA during genetic recombination and DNA repair, while the RuvA-RuvB complex plays an important role in the rescue of blocked DNA replication forks via replication fork reversal (RFR). RuvA specifically binds to HJ cruciform DNA, conferring on it an open structure. The RuvB hexamer acts as an ATP-dependent pump, pulling dsDNA into and through the RuvAB complex. RuvB forms 2 homohexamers on either side of HJ DNA bound by 1 or 2 RuvA tetramers; 4 subunits per hexamer contact DNA at a time. Coordinated motions by a converter formed by DNA-disengaged RuvB subunits stimulates ATP hydrolysis and nucleotide exchange. Immobilization of the converter enables RuvB to convert the ATP-contained energy into a lever motion, pulling 2 nucleotides of DNA out of the RuvA tetramer per ATP hydrolyzed, thus driving DNA branch migration. The RuvB motors rotate together with the DNA substrate, which together with the progressing nucleotide cycle form the mechanistic basis for DNA recombination by continuous HJ branch migration. Branch migration allows RuvC to scan DNA until it finds its consensus sequence, where it cleaves and resolves cruciform DNA. This Nitrosomonas eutropha (strain DSM 101675 / C91 / Nm57) protein is Holliday junction branch migration complex subunit RuvB.